A 237-amino-acid chain; its full sequence is ATP synthase subunit a (237 aa).

6 consecutive transmembrane segments (helical) span residues 18–38, 77–97, 103–123, 132–152, 185–205, and 209–229; these read STLWMAIGVLMIALLMVVGTL, IFTLFLFILFSNFLGLIPMAF, IAVTGVMAMGVFIGVTALGFM, LFWVSAAPLPLRPILAVIEVI, LILFSFVGVIVTPLSVLAIVA, and LEILVAFVQAYVFTILTCVYL.

It belongs to the ATPase A chain family. F-type ATPases have 2 components, CF(1) - the catalytic core - and CF(0) - the membrane proton channel. CF(1) has five subunits: alpha(3), beta(3), gamma(1), delta(1), epsilon(1). CF(0) has three main subunits: a(1), b(2) and c(9-12). The alpha and beta chains form an alternating ring which encloses part of the gamma chain. CF(1) is attached to CF(0) by a central stalk formed by the gamma and epsilon chains, while a peripheral stalk is formed by the delta and b chains.

The protein resides in the cellular chromatophore membrane. Its function is as follows. Key component of the proton channel; it plays a direct role in the translocation of protons across the membrane. This chain is ATP synthase subunit a, found in Rhodobacter capsulatus (Rhodopseudomonas capsulata).